A 113-amino-acid chain; its full sequence is Protein Rev (113 aa).

The segment at 15-23 (LIKFLYQSN) is homomultimerization. A disordered region spans residues 17-45 (KFLYQSNPPPSPEGTRQARRNRRRRWRQR). A Nuclear localization signal and RNA-binding (RRE) motif is present at residues 31-47 (TRQARRNRRRRWRQRQR). Over residues 33–45 (QARRNRRRRWRQR) the composition is skewed to basic residues. The Nuclear export signal and binding to XPO1 signature appears at 70–81 (LQLPPLERLTLD). 2 positions are modified to phosphoserine; by host: Ser-89 and Ser-96. A disordered region spans residues 89-113 (SGTQGVGSPQILVESPTILESGTKE).

This sequence belongs to the HIV-1 REV protein family. Homomultimer; when bound to the RRE. Multimeric assembly is essential for activity and may involve XPO1. Binds to human KPNB1, XPO1, TNPO1, RANBP5 and IPO7. Interacts with the viral Integrase. Interacts with human KHDRBS1. Interacts with human NAP1; this interaction decreases Rev multimerization and stimulates its activity. Interacts with human DEAD-box helicases DDX3 and DDX24; these interactions may serve for viral RNA export to the cytoplasm and packaging, respectively. Interacts with human PSIP1; this interaction may inhibit HIV-1 DNA integration by promoting dissociation of the Integrase-LEDGF/p75 complex. In terms of processing, asymmetrically arginine dimethylated at one site by host PRMT6. Methylation impairs the RNA-binding activity and export of viral RNA from the nucleus to the cytoplasm. Post-translationally, phosphorylated by protein kinase CK2. Presence of, and maybe binding to the N-terminus of the regulatory beta subunit of CK2 is necessary for CK2-mediated Rev's phosphorylation.

It localises to the host nucleus. Its subcellular location is the host nucleolus. The protein localises to the host cytoplasm. In terms of biological role, escorts unspliced or incompletely spliced viral pre-mRNAs (late transcripts) out of the nucleus of infected cells. These pre-mRNAs carry a recognition sequence called Rev responsive element (RRE) located in the env gene, that is not present in fully spliced viral mRNAs (early transcripts). This function is essential since most viral proteins are translated from unspliced or partially spliced pre-mRNAs which cannot exit the nucleus by the pathway used by fully processed cellular mRNAs. Rev itself is translated from a fully spliced mRNA that readily exits the nucleus. Rev's nuclear localization signal (NLS) binds directly to KPNB1/Importin beta-1 without previous binding to KPNA1/Importin alpha-1. KPNB1 binds to the GDP bound form of RAN (Ran-GDP) and targets Rev to the nucleus. In the nucleus, the conversion from Ran-GDP to Ran-GTP dissociates Rev from KPNB1 and allows Rev's binding to the RRE in viral pre-mRNAs. Rev multimerization on the RRE via cooperative assembly exposes its nuclear export signal (NES) to the surface. Rev can then form a complex with XPO1/CRM1 and Ran-GTP, leading to nuclear export of the complex. Conversion from Ran-GTP to Ran-GDP mediates dissociation of the Rev/RRE/XPO1/RAN complex, so that Rev can return to the nucleus for a subsequent round of export. Beside KPNB1, also seems to interact with TNPO1/Transportin-1, RANBP5/IPO5 and IPO7/RANBP7 for nuclear import. The nucleoporin-like HRB/RIP is an essential cofactor that probably indirectly interacts with Rev to release HIV RNAs from the perinuclear region to the cytoplasm. In Human immunodeficiency virus type 1 group M subtype B (isolate JH32) (HIV-1), this protein is Protein Rev.